A 317-amino-acid chain; its full sequence is Transaldolase (317 aa).

The active-site Schiff-base intermediate with substrate is the Lys-132.

This sequence belongs to the transaldolase family. Type 1 subfamily. In terms of assembly, homodimer.

It is found in the cytoplasm. The catalysed reaction is D-sedoheptulose 7-phosphate + D-glyceraldehyde 3-phosphate = D-erythrose 4-phosphate + beta-D-fructose 6-phosphate. Its pathway is carbohydrate degradation; pentose phosphate pathway; D-glyceraldehyde 3-phosphate and beta-D-fructose 6-phosphate from D-ribose 5-phosphate and D-xylulose 5-phosphate (non-oxidative stage): step 2/3. In terms of biological role, transaldolase is important for the balance of metabolites in the pentose-phosphate pathway. The protein is Transaldolase of Pseudoalteromonas atlantica (strain T6c / ATCC BAA-1087).